The primary structure comprises 629 residues: MFYPDPFDVIIIGGGHAGTEAAMAAARMGQQTLLLTHNIDTLGQMSCNPAIGGIGKGHLVKEVDALGGLMAKAIDQAGIQFRILNASKGPAVRATRAQADRVLYRQAVRTALENQPNLMIFQQAVEDLIVENDRVVGAVTQMGLKFRAKAVVLTVGTFLDGKIHIGLDNYSSGRAGDPPSIPLSRRLRELPLRVSRLKTGTPPRIDARTIDFSVLAQQHGDNPMPVFSFMGNASQHPQQVPCYITHTNEKTHDVIRNNLDRSPMYAGVIEGIGPRYCPSIEDKVMRFADRNQHQIFLEPEGLTSNEIYPNGISTSLPFDVQMQIVRSMQGMENAKIVRPGYAIEYDFFDPRDLKPTLESKFIQGLFFAGQINGTTGYEEAAAQGLLAGLNAARLSADKEGWAPARSQAYLGVLVDDLCTLGTKEPYRMFTSRAEYRLMLREDNADLRLTEMGRELGLVDDERWARFNEKLENIERERQRLKSTWVTPSAESAGEVNAHLTAPLSREASGEDLLRRPEMTYAQLTSLTPFAPGLDDAQAAEQVEIQVKYEGYIARQQDEIEKQLRNENTLLPATLDYRQVSGLSNEVIAKLNDHKPVSIGQASRISGVTPAAISILLVWLKKQGMLRRSA.

Residues 13–18 (GGGHAG), Val-125, and Ser-180 each bind FAD. 273–287 (GPRYCPSIEDKVMRF) serves as a coordination point for NAD(+). Position 370 (Gln-370) interacts with FAD.

Belongs to the MnmG family. In terms of assembly, homodimer. Heterotetramer of two MnmE and two MnmG subunits. FAD is required as a cofactor.

It is found in the cytoplasm. In terms of biological role, NAD-binding protein involved in the addition of a carboxymethylaminomethyl (cmnm) group at the wobble position (U34) of certain tRNAs, forming tRNA-cmnm(5)s(2)U34. The polypeptide is tRNA uridine 5-carboxymethylaminomethyl modification enzyme MnmG (Citrobacter koseri (strain ATCC BAA-895 / CDC 4225-83 / SGSC4696)).